The chain runs to 294 residues: Cytidine deaminase (294 aa).

CMP/dCMP-type deaminase domains are found at residues D48 to K168 and L186 to A294. N89–E91 serves as a coordination point for substrate. Position 102 (H102) interacts with Zn(2+). E104 functions as the Proton donor in the catalytic mechanism. The Zn(2+) site is built by C129 and C132.

It belongs to the cytidine and deoxycytidylate deaminase family. As to quaternary structure, homodimer. Zn(2+) serves as cofactor.

The enzyme catalyses cytidine + H2O + H(+) = uridine + NH4(+). It carries out the reaction 2'-deoxycytidine + H2O + H(+) = 2'-deoxyuridine + NH4(+). Functionally, this enzyme scavenges exogenous and endogenous cytidine and 2'-deoxycytidine for UMP synthesis. This chain is Cytidine deaminase, found in Escherichia coli O139:H28 (strain E24377A / ETEC).